Consider the following 337-residue polypeptide: uncharacterized protein (337 aa).

Residues 1–11 (MSEIEEEEEEG) show a composition bias toward acidic residues. Residues 1–20 (MSEIEEEEEEGSASAITGSR) are disordered. N-acetylserine is present on serine 2. A coiled-coil region spans residues 50-130 (ALSTRVSALE…LQRDVSKLEG (81 aa)). The segment at 139–242 (LQDDDQNAGT…PISPRRHSVS (104 aa)) is disordered. Low complexity predominate over residues 170-182 (SSIQSQQASEAIE). Residues 197–211 (LSASLPLVSQTTTPR) are compositionally biased toward polar residues. Residue threonine 213 is modified to Phosphothreonine. The residue at position 217 (serine 217) is a Phosphoserine. Polar residues predominate over residues 223–233 (ASGTPKTTSRP). Threonine 226 bears the Phosphothreonine mark. Phosphoserine is present on serine 235.

This is an uncharacterized protein from Arabidopsis thaliana (Mouse-ear cress).